We begin with the raw amino-acid sequence, 482 residues long: MKFTTYTTFPEQTSNESLWILVDSEQLQSNLNTYQINNLESILTATQFKANFNETLPLFGQLSTQPHSQLLGLGKAAELQAAKLAKLAQTIIKSAQNKFKHIAIDIAALPVEYHYLFALSLTQAAYGYDEFKSTKNEFVLQQVDLISSQTSLDENQLALVHAVQSGQSYARDLGNRPGNICFPEYLAEQALALAAEFPDLLKVTVLNEQQMADLGMYAFLAVSKGSERPGRIVTLEYQAQLEQAPVVLVGKGVTFDTGGISLKPGLGMDEMKFDMCGAASVLGTIRALCEARLPIHVVGAIAAAENMPSGKATRPGDIVTTMSGQTVEILNTDAEGRLVLCDTLTYIKRFNPAVVIDIATLTGACVVALGKVLSGLFSPDDTLAAELQQAGEQSFDRVWRMPVIDDYQELLDSPFADIANIGGPHGGAITAACFLERFTRDYRWAHLDVAGTAWLSGSAKGATGRPVPLLMQFLANRVSTNG.

Mn(2+)-binding residues include Lys-251 and Asp-256. Lys-263 is a catalytic residue. Positions 274, 333, and 335 each coordinate Mn(2+). Arg-337 is an active-site residue.

The protein belongs to the peptidase M17 family. Mn(2+) is required as a cofactor.

Its subcellular location is the cytoplasm. The catalysed reaction is Release of an N-terminal amino acid, Xaa-|-Yaa-, in which Xaa is preferably Leu, but may be other amino acids including Pro although not Arg or Lys, and Yaa may be Pro. Amino acid amides and methyl esters are also readily hydrolyzed, but rates on arylamides are exceedingly low.. It catalyses the reaction Release of an N-terminal amino acid, preferentially leucine, but not glutamic or aspartic acids.. Functionally, presumably involved in the processing and regular turnover of intracellular proteins. Catalyzes the removal of unsubstituted N-terminal amino acids from various peptides. This is Probable cytosol aminopeptidase from Acinetobacter baumannii (strain SDF).